Reading from the N-terminus, the 122-residue chain is Seripauperin-5 (122 aa).

The chain crosses the membrane as a helical span at residues 7 to 24; sequence IAAGVAAIAAGASAAATT.

The protein belongs to the SRP1/TIP1 family. Seripauperin subfamily.

Its subcellular location is the membrane. The sequence is that of Seripauperin-5 (PAU5) from Saccharomyces cerevisiae (strain ATCC 204508 / S288c) (Baker's yeast).